A 163-amino-acid chain; its full sequence is Glutathione peroxidase-like peroxiredoxin HYR1 (163 aa).

The active-site Cysteine sulfenic acid (-SOH) intermediate is C36. A disulfide bridge connects residues C36 and C82.

Belongs to the glutathione peroxidase family. As to quaternary structure, interacts with YAP1 and probably YBP1.

The protein resides in the cytoplasm. It localises to the mitochondrion intermembrane space. It is found in the peroxisome matrix. It carries out the reaction a hydroperoxide + [thioredoxin]-dithiol = an alcohol + [thioredoxin]-disulfide + H2O. Involved in oxidative stress response and redox homeostasis. Functions as a sensor and transducer of hydroperoxide stress. In response to hydroperoxide stress it oxidizes (activates) the transcription activator YAP1, which is involved in transcription activation of genes of the oxidative stress response pathway. May also play a direct role in hydroperoxide scavenging, being the most active of three closely related S.cerevisiae peroxiredoxins (GPX1, GPX2, and HYR1/GPX3) with respect to peroxide and lipid hydroperoxide reduction. The three enzymes are not required for the glutaredoxin-mediated antioxidant function. In the presence of peroxides, HYR1/GPX3 is directly oxidized at Cys-36 to form a cysteine sulfenic acid (-SOH). Cys-36-SOH then forms either an intramolecular disulfide bond (Cys-36 with Cys-82) or a transient, intermolecular disulfide bond with 'Cys-598' of YAP1, which is further resolved into a YAP1 intramolecular disulfide bond ('Cys-303' with 'Cys-598'), which causes its nuclear accumulation and activation, and a reduced Cys-36 in HYR1/GPX3. This chain is Glutathione peroxidase-like peroxiredoxin HYR1, found in Saccharomyces cerevisiae (strain ATCC 204508 / S288c) (Baker's yeast).